The primary structure comprises 182 residues: MSEAPKKRWYVVQAFSGFEGRVAQSLREHIKMHGMEEYFGEVLVPTEEVVEMRAGQRRKSERKFFPGYVLVQMIMNDESWHLVRSVPRVMGFIGGTSDRPAPISDKEADAILNRLEKASEAPRPRTMYEVGEVVRVNEGPFADFNGTVEEVDYEKSRLKVSVSIFGRATPVELEFGQVEKLD.

Residues 130 to 161 (VGEVVRVNEGPFADFNGTVEEVDYEKSRLKVS) form the KOW domain.

It belongs to the NusG family.

Participates in transcription elongation, termination and antitermination. This chain is Transcription termination/antitermination protein NusG, found in Vibrio vulnificus (strain CMCP6).